Here is a 97-residue protein sequence, read N- to C-terminus: MGFNIWSLLIILLIVALLFGTKKLRNIGGDLGGAIRGFKESMREGEEEEAQKRADGESSDEPEPLEHQDEPAPEQTTQARESSSARQSAEHHDRSTS.

Residues 1–21 (MGFNIWSLLIILLIVALLFGT) form a helical membrane-spanning segment. The disordered stretch occupies residues 28–97 (GGDLGGAIRG…SAEHHDRSTS (70 aa)). A compositionally biased stretch (basic and acidic residues) spans 37 to 56 (GFKESMREGEEEEAQKRADG). Low complexity predominate over residues 78–87 (QARESSSARQ). Residues 88 to 97 (SAEHHDRSTS) are compositionally biased toward basic and acidic residues.

This sequence belongs to the TatA/E family. In terms of assembly, the Tat system comprises two distinct complexes: a TatABC complex, containing multiple copies of TatA, TatB and TatC subunits, and a separate TatA complex, containing only TatA subunits. Substrates initially bind to the TatABC complex, which probably triggers association of the separate TatA complex to form the active translocon.

It localises to the cell inner membrane. Part of the twin-arginine translocation (Tat) system that transports large folded proteins containing a characteristic twin-arginine motif in their signal peptide across membranes. TatA could form the protein-conducting channel of the Tat system. In Halorhodospira halophila (strain DSM 244 / SL1) (Ectothiorhodospira halophila (strain DSM 244 / SL1)), this protein is Sec-independent protein translocase protein TatA.